Consider the following 780-residue polypeptide: Aconitate hydratase, mitochondrial (780 aa).

Residues 1–27 constitute a mitochondrion transit peptide; it reads MAPYSLLVTRLQKALGVRQYHVASVLC. N6-succinyllysine is present on Lys-31. Position 50 is an N6-acetyllysine; alternate (Lys-50). Residue Lys-50 is modified to N6-succinyllysine; alternate. Residue Gln-99 participates in substrate binding. Lys-138 and Lys-144 each carry N6-acetyllysine; alternate. N6-succinyllysine; alternate is present on residues Lys-138 and Lys-144. Residue 192 to 194 participates in substrate binding; the sequence is DSH. The residue at position 233 (Lys-233) is an N6-acetyllysine; alternate. Residue Lys-233 is modified to N6-succinyllysine; alternate. Cys-385 provides a ligand contact to [4Fe-4S] cluster. Residue Lys-411 is modified to N6-succinyllysine. Positions 448 and 451 each coordinate [4Fe-4S] cluster. The substrate site is built by Arg-474 and Arg-479. The span at 528–537 shows a compositional bias: basic and acidic residues; sequence DADELPKGEF. The tract at residues 528–560 is disordered; it reads DADELPKGEFDPGQDTYQHPPKDSSGQHVDVSP. Lys-549 is modified (N6-succinyllysine). Polar residues predominate over residues 551 to 560; it reads SSGQHVDVSP. At Ser-559 the chain carries Phosphoserine. Lys-573 is modified (N6-acetyllysine; alternate). The residue at position 573 (Lys-573) is an N6-succinyllysine; alternate. Residues Lys-577 and Lys-591 each carry the N6-succinyllysine modification. Lys-605 is subject to N6-acetyllysine; alternate. Lys-605 is modified (N6-succinyllysine; alternate). Arg-607 lines the substrate pocket. Lys-628 is subject to N6-succinyllysine. Position 670 is a phosphoserine (Ser-670). Residue 670–671 coordinates substrate; it reads SR. Lys-689 is subject to N6-succinyllysine. An N6-acetyllysine; alternate mark is found at Lys-723 and Lys-730. Lys-723 and Lys-730 each carry N6-succinyllysine; alternate. N6-acetyllysine is present on residues Lys-736, Lys-739, and Lys-743.

This sequence belongs to the aconitase/IPM isomerase family. In terms of assembly, monomer. The cofactor is [4Fe-4S] cluster. In terms of processing, forms covalent cross-links mediated by transglutaminase TGM2, between a glutamine and the epsilon-amino group of a lysine residue, forming homopolymers and heteropolymers.

It localises to the mitochondrion. It carries out the reaction citrate = D-threo-isocitrate. It participates in carbohydrate metabolism; tricarboxylic acid cycle; isocitrate from oxaloacetate: step 2/2. Functionally, catalyzes the isomerization of citrate to isocitrate via cis-aconitate. The polypeptide is Aconitate hydratase, mitochondrial (ACO2) (Homo sapiens (Human)).